Consider the following 303-residue polypeptide: Recombination-associated protein RdgC (303 aa).

This sequence belongs to the RdgC family.

Its subcellular location is the cytoplasm. It localises to the nucleoid. Functionally, may be involved in recombination. The sequence is that of Recombination-associated protein RdgC from Aeromonas hydrophila subsp. hydrophila (strain ATCC 7966 / DSM 30187 / BCRC 13018 / CCUG 14551 / JCM 1027 / KCTC 2358 / NCIMB 9240 / NCTC 8049).